Reading from the N-terminus, the 622-residue chain is Telomerase-associated protein of 75 kDa (622 aa).

In terms of assembly, component of the telomerase holoenzyme complex, composed of the catalytic core (the catalytic subunit TERT, the telomerase RNA template component TER and TAP65/p65), which is associated with two heterotrimeric subcomplexes: (i) the replication protein A (RPA)-related subcomplex, composed of TEB1, RPA2/TEB2 and RPA3/TEB3 and (ii) the CST-like subcomplex, composed of TAP75/p75, TAP45/p45 and TAP19/p19. TEB1 and the CST-like subcomplex are tethered to the catalytic core by TAP50/p50.

It localises to the chromosome. The protein localises to the telomere. Component of a CST-like subcomplex of the holoenzyme telomerase ribonucleoprotein complex, which stimulates telomerase complementary-strand synthesis. Telomerase is an essential ribonucleoprotein enzyme that copies new telomeric repeats onto chromosome ends by repetitively synthesizing the short telomere-repeat sequence 5'-TTGGGG-3' using an RNA template component TER. The CST-like subcomplex (also named 7-4-1) binds telomeric single-stranded DNA and coordinates telomere G-strand and C-strand synthesis. The chain is Telomerase-associated protein of 75 kDa from Tetrahymena thermophila (strain SB210).